A 469-amino-acid chain; its full sequence is NADH-quinone oxidoreductase subunit N (469 aa).

The next 14 membrane-spanning stretches (helical) occupy residues 2–22 (IALLPFILSLAATFINIFLCV), 28–48 (RYSINLNILFWVIIFISFFIV), 70–90 (FSFCFGVVLSALMIIFLISSF), 101–121 (EMFALASLAGFGLLAMSLSVE), 122–142 (LILTLIFLEVASISIYAMIAM), 157–177 (FLLSSFMSAFYLLGAAFVFGV), 194–214 (FLSIIGMILVLSMMFFKIAIF), 233–253 (GFLASAFKLASFAILIKLCFL), 261–281 (ILQGIFAILAILSMFAGNLLS), 290–310 (ILIAAGIVHSGYIFINLSSVG), 315–335 (IYPAIFYLSTYTIVVGFLFAI), 361–381 (AFAFTVICLSFIGFPYSVGFL), 398–418 (LAIFGIINTIFSVYYYLKIII), and 447–467 (ILFIILEGSGIFSIISFLNLF).

The protein belongs to the complex I subunit 2 family. NDH-1 is composed of 14 different subunits. Subunits NuoA, H, J, K, L, M, N constitute the membrane sector of the complex.

The protein resides in the cell inner membrane. It catalyses the reaction a quinone + NADH + 5 H(+)(in) = a quinol + NAD(+) + 4 H(+)(out). Functionally, NDH-1 shuttles electrons from NADH, via FMN and iron-sulfur (Fe-S) centers, to quinones in the respiratory chain. The immediate electron acceptor for the enzyme in this species is believed to be ubiquinone. Couples the redox reaction to proton translocation (for every two electrons transferred, four hydrogen ions are translocated across the cytoplasmic membrane), and thus conserves the redox energy in a proton gradient. In Campylobacter fetus subsp. fetus (strain 82-40), this protein is NADH-quinone oxidoreductase subunit N.